The sequence spans 210 residues: MSNLKPDVEHCTGAGTGTGTGPSGPLEEEVRTLFVSGLPVDIKPRELYLLFRPFKGYEGSLIKLTSRQPVGFVIFDSRAGAEAAKNALNGIRFDPENPQTLRLEFAKANTKMAKSKLIATPNPTSVHPALGAHLIARDPYDLMGAALIPASPEAWAPYPLYTTELTPAISHTTFTYPAATAAAAAALHAQVRWYPSSDTAQQGWKYRQFC.

Residues 1–10 (MSNLKPDVEH) show a composition bias toward basic and acidic residues. A disordered region spans residues 1-25 (MSNLKPDVEHCTGAGTGTGTGPSGP). Ser-2 carries the N-acetylserine modification. The RRM domain maps to 31–108 (RTLFVSGLPV…QTLRLEFAKA (78 aa)). Residues 41 to 51 (DIKPRELYLLF) are important for homodimerization.

As to quaternary structure, homodimer. Interacts with EEF2.

It localises to the cytoplasm. Its subcellular location is the nucleus. The protein localises to the stress granule. RNA-binding protein involved in the regulation of smooth muscle cell differentiation and proliferation in the gastrointestinal system. Binds NOG mRNA, the major inhibitor of the bone morphogenetic protein (BMP) pathway. Mediates an increase of NOG mRNA levels, thereby contributing to the negative regulation of BMP signaling pathway and promoting reversible dedifferentiation and proliferation of smooth muscle cells. Acts as a pre-mRNA alternative splicing regulator. Mediates ACTN1 and FLNB alternative splicing. Likely binds to mRNA tandem CAC trinucleotide or CA dinucleotide motifs. This Rattus norvegicus (Rat) protein is RNA binding protein, mRNA processing factor 2 (Rbpms2).